A 274-amino-acid chain; its full sequence is Bis(5'-nucleosyl)-tetraphosphatase, symmetrical (274 aa).

It belongs to the Ap4A hydrolase family.

It catalyses the reaction P(1),P(4)-bis(5'-adenosyl) tetraphosphate + H2O = 2 ADP + 2 H(+). Its function is as follows. Hydrolyzes diadenosine 5',5'''-P1,P4-tetraphosphate to yield ADP. This chain is Bis(5'-nucleosyl)-tetraphosphatase, symmetrical, found in Buchnera aphidicola subsp. Acyrthosiphon pisum (strain 5A).